Reading from the N-terminus, the 141-residue chain is Putative pre-16S rRNA nuclease (141 aa).

It belongs to the YqgF nuclease family.

It localises to the cytoplasm. Its function is as follows. Could be a nuclease involved in processing of the 5'-end of pre-16S rRNA. This Coxiella burnetii (strain CbuG_Q212) (Coxiella burnetii (strain Q212)) protein is Putative pre-16S rRNA nuclease.